The following is a 261-amino-acid chain: Probable membrane transporter protein XF_0764 (261 aa).

8 consecutive transmembrane segments (helical) span residues 6–26, 29–49, 78–98, 99–119, 150–170, 175–195, 205–225, and 239–259; these read LIVTIGSGGLVGFALGLLGGG, ILATPLLLYVVGVTNPHIAIG, VIFALVGTLGAFLGSSIGMLI, DGQRLLLLFGLLMAMVGLLML, AASGFFGIGGGFLIVPALIFA, TINAIGSSLLAVGTFGLITTL, WTIAMEFIVGGITGGGLGTLL, and VFGLIVIAVAIYVIWRSWASL.

Belongs to the 4-toluene sulfonate uptake permease (TSUP) (TC 2.A.102) family.

Its subcellular location is the cell membrane. This chain is Probable membrane transporter protein XF_0764, found in Xylella fastidiosa (strain 9a5c).